A 183-amino-acid chain; its full sequence is Translation initiation factor IF-3 (183 aa).

This sequence belongs to the IF-3 family. Monomer.

It localises to the cytoplasm. Functionally, IF-3 binds to the 30S ribosomal subunit and shifts the equilibrium between 70S ribosomes and their 50S and 30S subunits in favor of the free subunits, thus enhancing the availability of 30S subunits on which protein synthesis initiation begins. This Pseudomonas putida (strain ATCC 700007 / DSM 6899 / JCM 31910 / BCRC 17059 / LMG 24140 / F1) protein is Translation initiation factor IF-3.